The sequence spans 399 residues: Acetate kinase (399 aa).

Asn-9 provides a ligand contact to Mg(2+). Lys-16 provides a ligand contact to ATP. Arg-90 serves as a coordination point for substrate. Residue Asp-147 is the Proton donor/acceptor of the active site. ATP is bound by residues 207 to 211 (HLGNG), 281 to 283 (DFR), and 333 to 337 (GVGEN). A Mg(2+)-binding site is contributed by Glu-387.

The protein belongs to the acetokinase family. Homodimer. Requires Mg(2+) as cofactor. Mn(2+) is required as a cofactor.

It is found in the cytoplasm. The catalysed reaction is acetate + ATP = acetyl phosphate + ADP. It functions in the pathway metabolic intermediate biosynthesis; acetyl-CoA biosynthesis; acetyl-CoA from acetate: step 1/2. Catalyzes the formation of acetyl phosphate from acetate and ATP. Can also catalyze the reverse reaction. This Mycobacterium sp. (strain JLS) protein is Acetate kinase.